Here is a 91-residue protein sequence, read N- to C-terminus: Small ribosomal subunit protein bS20 (91 aa).

The segment at 72–91 (KNAASRQKSRLAKKLNGLSA) is disordered.

This sequence belongs to the bacterial ribosomal protein bS20 family.

Binds directly to 16S ribosomal RNA. The polypeptide is Small ribosomal subunit protein bS20 (Halalkalibacterium halodurans (strain ATCC BAA-125 / DSM 18197 / FERM 7344 / JCM 9153 / C-125) (Bacillus halodurans)).